A 423-amino-acid polypeptide reads, in one-letter code: Deferrochelatase (423 aa).

The tat-type signal signal peptide spans 1 to 35; it reads MQYEDENGVNEPSRRRLLKGIGALALAGSCPVAHA. Heme b-binding positions include 236 to 238, H329, 334 to 336, and R347; these read GTA and NPR.

Belongs to the DyP-type peroxidase family. EfeB subfamily. In terms of assembly, homodimer. Part of a ferrous iron transporter composed of EfeU, EfeO and EfeB. Heme b serves as cofactor. Post-translationally, predicted to be exported by the Tat system. The position of the signal peptide cleavage has not been experimentally proven.

Its subcellular location is the periplasm. The catalysed reaction is heme b + 2 H(+) = protoporphyrin IX + Fe(2+). Functionally, involved in the recovery of exogenous heme iron. Extracts iron from heme while preserving the protoporphyrin ring intact. This is Deferrochelatase (efeB) from Escherichia coli O6:K15:H31 (strain 536 / UPEC).